A 773-amino-acid polypeptide reads, in one-letter code: Protein YhgF (773 aa).

Residues 651–720 (GMILEGAVTN…QRKRIALTMR (70 aa)) enclose the S1 motif domain. Positions 721–773 (LDEQPGETNARRGGGNERPQNNRPAAKPRGREAQPAGNSAMMDALAAAMGKKR) are disordered.

The chain is Protein YhgF (yhgF) from Escherichia coli (strain K12).